The chain runs to 229 residues: DNA repair protein RecO (229 aa).

The protein belongs to the RecO family.

Its function is as follows. Involved in DNA repair and RecF pathway recombination. The chain is DNA repair protein RecO from Pseudomonas fluorescens (strain ATCC BAA-477 / NRRL B-23932 / Pf-5).